The following is a 148-amino-acid chain: UPF0260 protein Spro_2751 (148 aa).

It belongs to the UPF0260 family.

In Serratia proteamaculans (strain 568), this protein is UPF0260 protein Spro_2751.